We begin with the raw amino-acid sequence, 67 residues long: Medusin-PT (67 aa).

Positions 1 to 22 (MAFLKKSLFLVFFLGFVSLSIC) are cleaved as a signal peptide. A propeptide spanning residues 23–48 (EEEKRETDEKENEQEDDREERSEEKR) is cleaved from the precursor. The disordered stretch occupies residues 25–46 (EKRETDEKENEQEDDREERSEE). Residues 31–40 (EKENEQEDDR) are compositionally biased toward acidic residues. Leu-66 carries the leucine amide modification.

The protein belongs to the frog skin active peptide (FSAP) family. Medusin subfamily. In the synthetic mutant medusin-PT1a [T58K], the Leu-50 has been modified in a D-amino acid. In medusin-PT1a, there is an increase in antimicrobial activity, and an increase in hemolytic activity. It is more potent against S.aureus and gains activity against MRSA, E.faecalis, E.coli, P.aeruginosa and C.albicans. There is an important increase in both biofilm inhibition and biofilm eradication. In terms of tissue distribution, expressed by the skin glands.

The protein localises to the secreted. Its subcellular location is the target cell membrane. Its function is as follows. Antimicrobial peptide with activity against Gram-positive bacteria S.epidermidis ATCC 12228 (MIC=50 uM) and S.aureus (MIC=64 ug/ml and MBC=128 ug/ml). Not active against some Gram-positive bacteria (methicillin-resistant S.aureus (MRSA), E.faecalis), Gram-negative bacterium E.coli ATCC 25922 and fungus C.albicans at concentrations up to 100 uM. Can only slightly inhibit the formation of biofilm by S.aureus (minimal biofilm inhibitionconcentration MBIC=512 ug/ml, minimal biofilm eradication concentration MBEC&gt;512 ug/ml). Has an anti-inflammatory effect, since it inhibits the production of the pro-inflammatory cytokines TNF-alpha and IL-1beta. Has high activity of stimulation of insulin release, which may protect the species from being eaten by predators by causing fatal hypoglycemia. Is not cytotoxic to cancer line cells. Shows very low hemolysis on horse erythrocytes and moderate hemolysis on mouse erythrocytes. In Phyllomedusa tarsius (Brownbelly leaf frog), this protein is Medusin-PT.